The chain runs to 255 residues: Imidazole glycerol phosphate synthase subunit HisF (255 aa).

Catalysis depends on residues Asp-11 and Asp-130.

This sequence belongs to the HisA/HisF family. Heterodimer of HisH and HisF.

It is found in the cytoplasm. It catalyses the reaction 5-[(5-phospho-1-deoxy-D-ribulos-1-ylimino)methylamino]-1-(5-phospho-beta-D-ribosyl)imidazole-4-carboxamide + L-glutamine = D-erythro-1-(imidazol-4-yl)glycerol 3-phosphate + 5-amino-1-(5-phospho-beta-D-ribosyl)imidazole-4-carboxamide + L-glutamate + H(+). Its pathway is amino-acid biosynthesis; L-histidine biosynthesis; L-histidine from 5-phospho-alpha-D-ribose 1-diphosphate: step 5/9. Functionally, IGPS catalyzes the conversion of PRFAR and glutamine to IGP, AICAR and glutamate. The HisF subunit catalyzes the cyclization activity that produces IGP and AICAR from PRFAR using the ammonia provided by the HisH subunit. The protein is Imidazole glycerol phosphate synthase subunit HisF of Exiguobacterium sp. (strain ATCC BAA-1283 / AT1b).